Consider the following 201-residue polypeptide: Cell division protein SepF (201 aa).

Residues 27-38 are compositionally biased toward basic and acidic residues; sequence VQERTSVQRDSR. Residues 27-99 are disordered; it reads VQERTSVQRD…PRVQNKDSVR (73 aa). Residues 43–54 are compositionally biased toward polar residues; the sequence is QEASQRSHMTNS. Over residues 72 to 81 the composition is skewed to basic and acidic residues; sequence NRQERQRVQR. The span at 83–92 shows a compositional bias: polar residues; that stretch reads NAYQQATPRV.

This sequence belongs to the SepF family. As to quaternary structure, homodimer. Interacts with FtsZ.

It localises to the cytoplasm. Functionally, cell division protein that is part of the divisome complex and is recruited early to the Z-ring. Probably stimulates Z-ring formation, perhaps through the cross-linking of FtsZ protofilaments. Its function overlaps with FtsA. This Streptococcus agalactiae serotype Ia (strain ATCC 27591 / A909 / CDC SS700) protein is Cell division protein SepF.